A 472-amino-acid polypeptide reads, in one-letter code: Probable endopolygalacturonase D (472 aa).

Residues Met-1–Ala-16 form the signal peptide. An N-linked (GlcNAc...) asparagine glycan is attached at Asn-24. An intrachain disulfide couples Cys-129 to Cys-144. 3 PbH1 repeats span residues Met-236 to His-258, Thr-259 to Ser-297, and Ser-298 to Ser-319. Asn-300 is a glycosylation site (N-linked (GlcNAc...) asparagine). Asp-312 acts as the Proton donor in catalysis. Residues Cys-314 and Cys-330 are joined by a disulfide bond. The active site involves His-334. 4 PbH1 repeats span residues Val-349–Ser-370, Val-378–Gln-400, Thr-412–Lys-433, and Cys-444–Asp-467. N-linked (GlcNAc...) asparagine glycosylation is found at Asn-361, Asn-385, and Asn-419. 2 disulfides stabilise this stretch: Cys-439-Cys-444 and Cys-462-Cys-469.

Belongs to the glycosyl hydrolase 28 family.

Its subcellular location is the secreted. The catalysed reaction is (1,4-alpha-D-galacturonosyl)n+m + H2O = (1,4-alpha-D-galacturonosyl)n + (1,4-alpha-D-galacturonosyl)m.. Its function is as follows. Involved in maceration and soft-rotting of plant tissue. Hydrolyzes the 1,4-alpha glycosidic bonds of de-esterified pectate in the smooth region of the plant cell wall. This is Probable endopolygalacturonase D (pgaD) from Neosartorya fischeri (strain ATCC 1020 / DSM 3700 / CBS 544.65 / FGSC A1164 / JCM 1740 / NRRL 181 / WB 181) (Aspergillus fischerianus).